The following is an 853-amino-acid chain: DNA mismatch repair protein MutS (853 aa).

Gly614–Ser621 serves as a coordination point for ATP.

Belongs to the DNA mismatch repair MutS family.

Functionally, this protein is involved in the repair of mismatches in DNA. It is possible that it carries out the mismatch recognition step. This protein has a weak ATPase activity. The protein is DNA mismatch repair protein MutS of Escherichia fergusonii (strain ATCC 35469 / DSM 13698 / CCUG 18766 / IAM 14443 / JCM 21226 / LMG 7866 / NBRC 102419 / NCTC 12128 / CDC 0568-73).